A 235-amino-acid chain; its full sequence is Elongation factor Tu, chloroplastic (235 aa).

The region spanning 1 to 125 (KNMITGAAQM…KVDSYIPTPQ (125 aa)) is the tr-type G domain. 47-50 (NKED) is a binding site for GTP.

It belongs to the TRAFAC class translation factor GTPase superfamily. Classic translation factor GTPase family. EF-Tu/EF-1A subfamily.

It is found in the plastid. The protein resides in the chloroplast. It catalyses the reaction GTP + H2O = GDP + phosphate + H(+). In terms of biological role, GTP hydrolase that promotes the GTP-dependent binding of aminoacyl-tRNA to the A-site of ribosomes during protein biosynthesis. This is Elongation factor Tu, chloroplastic (tufA) from Gonium pectorale (Green alga).